We begin with the raw amino-acid sequence, 1157 residues long: Hephaestin (1157 aa).

Positions 1–18 are cleaved as a signal peptide; that stretch reads MKAGHLLWALLLMHSLWS. Residues 19 to 1109 lie on the Extracellular side of the membrane; sequence IPTDGAIRNY…PIKDVEILSS (1091 aa). 6 consecutive Plastocyanin-like domains span residues 24 to 206, 218 to 366, 370 to 559, 569 to 717, 730 to 902, and 910 to 1066; these read AIRN…LITC, QRKD…VDSC, PPVD…LLVC, KQKG…VSQC, ASRV…LVIC, and NGGR…SHEE. Asparagine 49 and asparagine 54 each carry an N-linked (GlcNAc...) asparagine glycan. Positions 70 and 73 each coordinate Na(+). Histidine 126 and histidine 128 together coordinate Cu(2+). An O2-binding site is contributed by histidine 126. Ca(2+) contacts are provided by lysine 134, aspartate 152, and aspartate 153. Asparagine 164 is a glycosylation site (N-linked (GlcNAc...) asparagine). A disulfide bridge links cysteine 180 with cysteine 206. Cu(2+)-binding residues include histidine 186 and histidine 188. Histidine 186 lines the O2 pocket. The N-linked (GlcNAc...) asparagine glycan is linked to asparagine 236. Serine 265 lines the Na(+) pocket. Residues cysteine 285 and cysteine 366 are joined by a disulfide bond. Cu(2+)-binding residues include histidine 304, cysteine 347, and histidine 352. Residues tyrosine 416, glycine 425, and tyrosine 428 each coordinate Na(+). Cysteines 533 and 559 form a disulfide. Residue asparagine 587 is glycosylated (N-linked (GlcNAc...) asparagine). Na(+) is bound at residue serine 616. A disulfide bridge links cysteine 636 with cysteine 717. Cu(2+)-binding residues include histidine 655, cysteine 698, histidine 703, and methionine 708. N-linked (GlcNAc...) asparagine glycosylation is found at asparagine 713 and asparagine 757. Residues phenylalanine 768 and glycine 777 each coordinate Na(+). Residues cysteine 876 and cysteine 902 are joined by a disulfide bond. N-linked (GlcNAc...) asparagine glycosylation is present at asparagine 930. The Cu(2+) site is built by histidine 999, histidine 1002, histidine 1004, histidine 1044, cysteine 1045, histidine 1046, histidine 1050, and methionine 1055. Residues histidine 1002 and histidine 1004 each coordinate O2. Residue histidine 1046 coordinates O2. The chain crosses the membrane as a helical span at residues 1110–1130; sequence ALIAICVLLLLIALALGGVVW. The Cytoplasmic segment spans residues 1131-1157; sequence YQHRQRKLRRNRRSILDDSFKLLSLKQ. A phosphoserine mark is found at serine 1144, serine 1149, and serine 1154.

The protein belongs to the multicopper oxidase family. As to quaternary structure, part of a complex composed of SLC40A1/ferroportin, TF/transferrin and HEPH/hephaestin that transfers iron from cells to transferrin. It depends on Cu cation as a cofactor.

It localises to the basolateral cell membrane. The catalysed reaction is 4 Fe(2+) + O2 + 4 H(+) = 4 Fe(3+) + 2 H2O. In terms of biological role, plasma membrane ferroxidase that mediates the extracellular conversion of ferrous/Fe(2+) iron into its ferric/Fe(3+) form. Couples ferroportin which specifically exports ferrous/Fe(2+) iron from cells to transferrin that only binds and shuttles extracellular ferric/Fe(3+) iron throughout the body. By helping iron transfer from cells to blood mainly contributes to dietary iron absorption by the intestinal epithelium and more generally regulates iron levels in the body. This chain is Hephaestin, found in Mus musculus (Mouse).